Here is a 406-residue protein sequence, read N- to C-terminus: Tyrosine--tRNA ligase (406 aa).

Tyrosine 39 is a binding site for L-tyrosine. A 'HIGH' region motif is present at residues 44-53 (PTADSLHVGH). The L-tyrosine site is built by tyrosine 172 and glutamine 176. The short motif at 232–236 (KMGKT) is the 'KMSKS' region element. Lysine 235 contacts ATP. In terms of domain architecture, S4 RNA-binding spans 344–404 (KELLDVLVDR…LGKKKFYNIV (61 aa)).

The protein belongs to the class-I aminoacyl-tRNA synthetase family. TyrS type 1 subfamily. Homodimer.

It localises to the cytoplasm. The catalysed reaction is tRNA(Tyr) + L-tyrosine + ATP = L-tyrosyl-tRNA(Tyr) + AMP + diphosphate + H(+). In terms of biological role, catalyzes the attachment of tyrosine to tRNA(Tyr) in a two-step reaction: tyrosine is first activated by ATP to form Tyr-AMP and then transferred to the acceptor end of tRNA(Tyr). This Fusobacterium nucleatum subsp. nucleatum (strain ATCC 25586 / DSM 15643 / BCRC 10681 / CIP 101130 / JCM 8532 / KCTC 2640 / LMG 13131 / VPI 4355) protein is Tyrosine--tRNA ligase.